The following is a 1926-amino-acid chain: Myosin-15 (1926 aa).

The Myosin N-terminal SH3-like domain maps to 29 to 79; sequence DGKKKCWIPDGENAYIEAEVKGSEDDGTVIVETADGESLSIKEDKIQQMNP. In terms of domain architecture, Myosin motor spans 83–770; the sequence is EMIEDMAMLT…FLGQLEAIRD (688 aa). Position 127 is an N6,N6,N6-trimethyllysine (lysine 127). 176–183 is a binding site for ATP; it reads GESGAGKT. Actin-binding stretches follow at residues 647–669 and 749–763; these read LNKL…NPNV and RFGI…GFLG. Residues 773–802 enclose the IQ domain; the sequence is LSKVFTLFQARAQGKLMRIKFQKILEERDA. A coiled-coil region spans residues 833 to 1926; the sequence is KSSEVGEEVA…REFGKKVQEE (1094 aa).

This sequence belongs to the TRAFAC class myosin-kinesin ATPase superfamily. Myosin family. As to quaternary structure, muscle myosin is a hexameric protein that consists of 2 heavy chain subunits (MHC), 2 alkali light chain subunits (MLC) and 2 regulatory light chain subunits (MLC-2).

The protein resides in the cytoplasm. It localises to the myofibril. In terms of biological role, muscle contraction. The sequence is that of Myosin-15 (MYH15) from Homo sapiens (Human).